A 154-amino-acid chain; its full sequence is Deoxyuridine 5'-triphosphate nucleotidohydrolase (154 aa).

Substrate-binding positions include 70–72 (RSG), asparagine 83, 87–89 (LID), and methionine 97.

It belongs to the dUTPase family. Mg(2+) is required as a cofactor.

It catalyses the reaction dUTP + H2O = dUMP + diphosphate + H(+). It participates in pyrimidine metabolism; dUMP biosynthesis; dUMP from dCTP (dUTP route): step 2/2. This enzyme is involved in nucleotide metabolism: it produces dUMP, the immediate precursor of thymidine nucleotides and it decreases the intracellular concentration of dUTP so that uracil cannot be incorporated into DNA. In Buchnera aphidicola subsp. Acyrthosiphon pisum (strain 5A), this protein is Deoxyuridine 5'-triphosphate nucleotidohydrolase.